A 522-amino-acid polypeptide reads, in one-letter code: Cyclic GMP-AMP synthase (522 aa).

The disordered stretch occupies residues 1 to 144 (MQPWHGKAMQ…PPGPWDVPSP (144 aa)). 2 DNA-binding regions span residues 1–160 (MQPW…DAAP) and 173–215 (KLSR…GSYY). Lys-7 is subject to N6-acetyllysine. Ser-13 is subject to Phosphoserine. Residue Lys-21 is modified to N6-acetyllysine. At Ser-37 the chain carries Phosphoserine. N6-acetyllysine is present on residues Lys-47, Lys-50, Lys-56, Lys-62, and Lys-63. At Ser-64 the chain carries Phosphoserine. A compositionally biased stretch (basic and acidic residues) spans 64 to 73 (SAPDTQERPP). The tract at residues 64–75 (SAPDTQERPPVR) is required for association with the cell membrane. Thr-68 is subject to Phosphothreonine. N6-acetyllysine occurs at positions 82 and 83. Residues 88 to 97 (AQDTQPSDAT) show a composition bias toward polar residues. Thr-91 is subject to Phosphothreonine. Phosphoserine is present on residues Ser-98, Ser-116, and Ser-129. A compositionally biased stretch (low complexity) spans 98 to 118 (SAPGAEGLEPPAAREPALSRA). The interval 120–160 (SCRQRGARCSTKPRPPPGPWDVPSPGLPVSAPILVRRDAAP) is required for activation upon DNA viral infection. The residue at position 131 (Lys-131) is an N6-lactoyllysine. Pro residues predominate over residues 132–144 (PRPPPGPWDVPSP). Ser-143 carries the post-translational modification Phosphoserine. Positions 169 to 174 (LEKLKL) match the Nuclear export signal motif. Lys-173 participates in a covalent cross-link: Glycyl lysine isopeptide (Lys-Gly) (interchain with G-Cter in ubiquitin). PolyADP-ribosyl aspartic acid is present on Asp-191. Asn-210 carries the post-translational modification (Microbial infection) Deamidated asparagine; by herpes simplex virus 1/HHV-1 UL37. Thr-211 serves as a coordination point for GTP. Phosphoserine is present on Ser-213. An ATP-binding site is contributed by Ser-213. Tyr-215 carries the post-translational modification Phosphotyrosine; by BLK. Mg(2+) contacts are provided by Glu-225 and Asp-227. 225–227 (EFD) is a binding site for ATP. Asp-227 is a binding site for 2',3'-cGAMP. Residue Lys-231 forms a Glycyl lysine isopeptide (Lys-Gly) (interchain with G-Cter in SUMO) linkage. A Glycyl lysine isopeptide (Lys-Gly) (interchain with G-Cter in ubiquitin) cross-link involves residue Lys-285. 5-glutamyl polyglutamate is present on Glu-286. The Nuclear localization signal motif lies at 295 to 305 (DVIMKRKRGGS). Residues 299–302 (KRKR) carry the KRKR-loop motif. The residue at position 305 (Ser-305) is a Phosphoserine; by CDK1 and PKB. Glu-314 carries the post-translational modification 5-glutamyl glutamate. Asp-319 is a binding site for GTP. Asp-319 is a Mg(2+) binding site. Asp-319 serves as a coordination point for 2',3'-cGAMP. The interval 341-382 (QNWLSAKVRKQLRLKPFYLVPKHAKEGNGFQEETWRLSFSHI) is interaction with collided ribosomes. Lys-347 is covalently cross-linked (Glycyl lysine isopeptide (Lys-Gly) (interchain with G-Cter in SUMO); alternate). Lys-347 is covalently cross-linked (Glycyl lysine isopeptide (Lys-Gly) (interchain with G-Cter in ubiquitin); alternate). Lys-362 and Arg-376 together coordinate 2',3'-cGAMP. 376–383 (RLSFSHIE) serves as a coordination point for GTP. 380-383 (SHIE) contributes to the ATP binding site. Position 384 is an N6-acetyllysine (Lys-384). Residue Lys-384 forms a Glycyl lysine isopeptide (Lys-Gly) (interchain with G-Cter in SUMO); alternate linkage. Lys-384 participates in a covalent cross-link: Glycyl lysine isopeptide (Lys-Gly) (interchain with G-Cter in ubiquitin); alternate. Residues 384-407 (KEILNNHGKSKTCCENKEEKCCRK) form a DNA-binding region. (Microbial infection) Deamidated asparagine; by herpes simplex virus 1/HHV-1 UL37 is present on Asn-389. His-390 is a binding site for Zn(2+). N6-acetyllysine occurs at positions 392 and 394. A Glycyl lysine isopeptide (Lys-Gly) (interchain with G-Cter in SUMO) cross-link involves residue Lys-394. The Zn(2+) site is built by Cys-396, Cys-397, and Cys-404. 2 S-palmitoyl cysteine lipidation sites follow: Cys-404 and Cys-405. Residues Lys-411, Lys-414, Lys-427, and Lys-428 each participate in a glycyl lysine isopeptide (Lys-Gly) (interchain with G-Cter in ubiquitin) cross-link. An N6-acetyllysine modification is found at Lys-414. Residue Lys-414 participates in ATP binding. The KKH-loop signature appears at 427–429 (KKH). Phosphoserine occurs at positions 434 and 435. 435 to 439 (SYHVK) is a binding site for ATP. (Microbial infection) Deamidated glutamine; by herpes simplex virus 1/HHV-1 UL37 is present on residues Gln-451 and Gln-454. Residue Cys-474 is the site of S-palmitoyl cysteine attachment. Lys-479 is covalently cross-linked (Glycyl lysine isopeptide (Lys-Gly) (interchain with G-Cter in SUMO); alternate). A Glycyl lysine isopeptide (Lys-Gly) (interchain with G-Cter in ubiquitin); alternate cross-link involves residue Lys-479. Lys-506 bears the N6-methyllysine mark.

Belongs to the mab-21 family. In terms of assembly, monomer in the absence of DNA. Homodimer in presence of dsDNA: forms a 2:2 dimer with two enzymes binding to two DNA molecules. Interacts with nucleosomes; interaction is mainly mediated via histones H2A and H2B and inactivates the nucleotidyltransferase activity by blocking DNA-binding and subsequent activation. Interacts with PQBP1 (via WW domain). Interacts with TRIM14; this interaction recruits USP14, leading to deubiquitinate and stabilize CGAS and promote type I interferon production. Interacts with ZCCHC3; promoting sensing of dsDNA by CGAS. Interacts (when not monomethylated) with (poly-ADP-ribosylated) PARP1; interaction takes place in the nucleus and prevents the formation of the PARP1-TIMELESS complex. Interacts (when monomethylated) with SGF29; interaction with SGF29 prevents interaction with PARP1. Interacts with PCBP2; preventing the formation of liquid-like droplets in which CGAS is activated. Interacts with IRGM; promoting CGAS degradation. Interacts with DDX41. (Microbial infection) Interacts with herpes virus 8/HHV-8 protein ORF52; this interaction inhibits cGAS enzymatic activity by preventing the formation of liquid-like droplets by CGAS. As to quaternary structure, (Microbial infection) Interacts with herpes simplex virus 1 protein UL37; this interaction deaminates CGAS and inhibits its activation. In terms of assembly, (Microbial infection) Interacts with vaccinia virus protein OPG067; this interaction promotes CGAS proteasomal degradation. (Microbial infection) Interacts with cytomegalovirus protein UL31; this interaction promotes dissociation of DNA from CGAS, thereby inhibiting the enzymatic activity of CGAS. As to quaternary structure, (Microbial infection) Interacts with herpes simplex virus 1 tegument protein VP22 (UL49); this interaction inhibits cGAS enzymatic activity by preventing the formation of liquid-like droplets by CGAS. In terms of assembly, (Microbial infection) Interacts with herpesvirus 3 tegument protein VP22 (ORF9); this interaction inhibits cGAS enzymatic activity by preventing the formation of liquid-like droplets by CGAS. (Microbial infection) Interacts with human cytomegalovirus proteins UL42 and UL83; these interactions result in the inhibition of cGAS-STING signaling. Mg(2+) is required as a cofactor. Requires Mn(2+) as cofactor. It depends on Zn(2+) as a cofactor. The N-terminal disordered part (1-160) is phosphorylated by AURKB during the G2-M transition, blocking CGAS liquid phase separation and preventing activation. Phosphorylation at Tyr-215 by BLK promotes cytosolic retention. Localizes into the nucleus following dephosphorylation at Tyr-215. Phosphorylation at Ser-435 activates the nucleotidyltransferase activity. Dephosphorylation at Ser-435 by PPP6C impairs its ability to bind GTP, thereby inactivating it. Phosphorylation at Thr-68 and Ser-213 by PRKDC inhibits its cyclic GMP-AMP synthase activity by impairing homodimerization and activation. Phosphorylation at Ser-305 by AKT (AKT1, AKT2 or AKT3) suppresses the nucleotidyltransferase activity. Phosphorylation at Ser-305 by CDK1 during mitosis leads to its inhibition, thereby preventing CGAS activation by self-DNA during mitosis. Dephosphorylated at Ser-305 by protein phosphatase PP1 upon mitotic exit. In terms of processing, ubiquitinated at Lys-414 via 'Lys-48'-linked polyubiquitin chains, leading to its SQSTM1-mediated autophagic degradation. Interaction with TRIM14 promotes recruitment of USP14, leading to deubiquitinate Lys-414 and stabilize CGAS. Ubiquitinated at Lys-173 and Lys-384 by RNF185 via 'Lys-27'-linked polyubiquitination, promoting CGAS cyclic GMP-AMP synthase activity. Monoubiquitination at Lys-347 by TRIM56 promotes oligomerization and subsequent activation. Monoubiquitination by TRIM41 promotes CGAS activation. Ubiquitination at Lys-285 and Lys-479 via 'Lys-48'-linked polyubiquitination promotes its degradation. Deubiquitination at Lys-285 by USP29 promotes its stabilization. Deubiquitinated by USP27X, promoting its stabilization. Ubiquitinated at Lys-411 via 'Lys-63'-linked polyubiquitin chains by MARCHF8, leading to the inhibition of its DNA binding ability. In cycling cells, nucleosome-bound CGAS is ubiquitinated at Lys-427 and Lys-428 via 'Lys-48'-linked polyubiquitin chains by the ECS(SPSB3) complex, leading to its degradation: ubiquitination and degradation of nuclear CGAS during G1 and G2 phases is required to promote low intranuclear CGAS abundance before the next mitotic cycle. Post-translationally, sumoylated at Lys-231 and Lys-479 by TRIM38 in uninfected cells and during the early phase of viral infection, promoting its stability by preventing ubiquitination at Lys-285 and Lys-479, and subsequent degradation. Desumoylated by SENP2 during the late phase of viral infection. Sumoylation at Lys-347, Lys-384 and Lys-394 prevents DNA-binding, oligomerization and nucleotidyltransferase activity. Desumoylation at Lys-347, Lys-384 and Lys-394 by SENP7 relieves inhibition and activates CGAS. Polyglutamylated by TTLL6 at Glu-286, leading to impair DNA-binding activity. Monoglutamylated at Glu-314 by TTLL4, leading to impair the nucleotidyltransferase activity. Deglutamylated by AGBL5/CCP5 and AGBL6/CCP6. In terms of processing, acetylation at Lys-384, Lys-394 and Lys-414 inhibits the cyclic GMP-AMP synthase activity. Deacetylated upon cytosolic DNA challenge such as viral infections. Acetylation can be mediated by aspirin (acetylsalicylate) drug, which directly acetylates CGAS. Acetylation by aspirin efficiently inhibits CGAS-mediated immune responses and is able to suppress self-DNA-induced autoimmunity. Acetylation at Lys-47, Lys-56, Lys-62 and Lys-83 by KAT5 increases the cyclic GMP-AMP synthase activity by promoting DNA-binding and subsequent activation. Post-translationally, proteolytically cleaved by apoptotic caspases during apoptosis, leading to its inactivation. The damage of the nucleus and the mitochondria during apoptosis leads to leakage of nuclear and mitochondrial DNA, which activate CGAS: cleavage and inactivation during apoptosis in required to prevent cytokine overproduction. Cleaved by CASP3 at Asp-319 during virus-induced apoptosis, thereby inactivating it and preventing cytokine overproduction. Cleaved by CASP1 at Asp-140 and Asp-157 upon DNA virus infection; the cleavage impairs cGAMP production. Also cleaved by the pyroptotic CASP4 and CASP5 during non-canonical inflammasome activation; they don't cut at the same sites than CASP1. Degraded via selective autophagy following interaction with IRGM. IRGM promotes CGAS recruitment to autophagosome membranes, promoting its SQSTM1/p62-dependent autophagic degradation. In terms of processing, poly-ADP-ribosylation at Asp-191 by PARP1 impairs DNA-binding, thereby preventing the cyclic GMP-AMP synthase activity. Post-translationally, palmitoylation at Cys-474 by ZDHHC18 impairs DNA-binding, thereby preventing the cyclic GMP-AMP synthase activity. Palmitoylation at Cys-404 and Cys-405 by ZDHHC9 promotes homodimerization and cyclic GMP-AMP synthase activity. Depalmitoylation at Cys-404 and Cys-405 by LYPLAL1 impairs homodimerization and cyclic GMP-AMP synthase activity. Monomethylated at Lys-506 by SETD7. Monomethylation promotes interaction with SGF29, preventing interaction between PARP1 nad SGF29. Demethylation by RIOX1 promotes interaction with PARP1, followed by PARP1 inactivation. In terms of processing, lactylation by AARS2 prevents ability to undergo liquid-liquid phase separation (LLPS), thereby inhibiting CGAS activation. Post-translationally, (Microbial infection) Deamidated on 'Asn-210' by herpes simplex virus 1 protein UL37. This modification significantly reduces CGAS-dependent cGAMP production and innate immune signaling induced by dsDNA. (Microbial infection) Degraded by an autophagy-mediated mechanism in presence of Chikungunya virus capsid protein. In terms of tissue distribution, expressed in the monocytic cell line THP1.

It localises to the nucleus. The protein localises to the chromosome. The protein resides in the cell membrane. It is found in the cytoplasm. Its subcellular location is the cytosol. The catalysed reaction is GTP + ATP = 2',3'-cGAMP + 2 diphosphate. It carries out the reaction GTP + ATP = pppGp(2'-5')A + diphosphate. It catalyses the reaction pppGp(2'-5')A = 2',3'-cGAMP + diphosphate. With respect to regulation, the enzyme activity is strongly increased by double-stranded DNA (dsDNA), but not by single-stranded DNA or RNA. DNA-binding induces the formation of liquid-like droplets in which CGAS is activated. Liquid-like droplets also create a selective environment that restricts entry of negative regulators, such as TREX1 or BANF1/BAF, allowing sensing of DNA. A number of mechanisms exist to restrict its activity toward self-DNA. The nucleotidyltransferase activity is inhibited in the nucleus via its association with nucleosomes: interacts with the acidic patch of histones H2A and H2B, thereby blocking DNA-binding and subsequent activation. CGAS is also inactive when associated with mitotic chromatin. Chromatin-bound CGAS cannot be activated by exogenous DNA in mitotic cells: phosphorylation of the N-terminal disordered part by AURKB during the G2-M transition blocks CGAS liquid phase separation and activation. Activity toward self-DNA is inhibited by BANF1/BAF upon acute loss of nuclear membrane integrity: BANF1/BAF acts by outcompeting CGAS for DNA-binding, thereby preventing CGAS activation. DNA-induced activation at micronuclei is also limited by TREX1, which degrades micronuclear DNA upon nuclear envelope rupture, thereby preventing CGAS activation. CGAS can be released from nucleosomes and activated by MRE11 component of the MRN complex, which displaces CGAS from acidic-patch-mediated sequestration. Acetylation at Lys-384, Lys-394 and Lys-414 inhibits the cyclic GMP-AMP synthase activity. Inhibited by aspirin (acetylsalicylate) drug, which acetylates CGAS. Acetylation by KAT5 increases the cyclic GMP-AMP synthase activity by promoting DNA-binding and subsequent activation. Phosphorylation at Ser-305 suppresses the nucleotidyltransferase activity. Phosphorylation at Ser-435 promotes the cyclic GMP-AMP synthase activity. Phosphorylation at Thr-68 and Ser-213 inhibits its cyclic GMP-AMP synthase activity. Ubiquitination at Lys-173 and Lys-384 via 'Lys-27'-linked polyubiquitination enhances the cyclic GMP-AMP synthase activity. Monoubiquitination at Lys-347 promotes oligomerization and subsequent activation. Sumoylation at Lys-347, Lys-384 and Lys-394 prevents DNA-binding, oligomerization and nucleotidyltransferase activity. The enzyme activity is impaired by the cleavage at Asp-140 and Asp-157 produced by CASP1. In addition to DNA, also activated by collided ribosomes upon translation stress: specifically binds collided ribosomes, promoting its activation and triggering type-I interferon production. Strongly inhibited by compound PF-06928215, which is specific for human protein. Inhibited by small-molecule inhibitors with a pyridoindole tricyclic core G108, G140 and G150. Its activity is regulated as follows. (Microbial infection) Nucleotidyltransferase activity is inhibited by different herpesvirus tegument proteins (Herpes simplex virus 1 tegument protein VP22, herpes virus 8 protein ORF52 and herpesvirus 3 tegument protein VP22/ORF9). Viral tegument proteins act by disrupting liquid-like droplets in which CGAS is activated, thereby preventing CGAS activity. Nucleotidyltransferase that catalyzes the formation of cyclic GMP-AMP (2',3'-cGAMP) from ATP and GTP and plays a key role in innate immunity. Catalysis involves both the formation of a 2',5' phosphodiester linkage at the GpA step and the formation of a 3',5' phosphodiester linkage at the ApG step, producing c[G(2',5')pA(3',5')p]. Acts as a key DNA sensor: directly binds double-stranded DNA (dsDNA), inducing the formation of liquid-like droplets in which CGAS is activated, leading to synthesis of 2',3'-cGAMP, a second messenger that binds to and activates STING1, thereby triggering type-I interferon production. Preferentially recognizes and binds curved long dsDNAs of a minimal length of 40 bp. Acts as a key foreign DNA sensor, the presence of double-stranded DNA (dsDNA) in the cytoplasm being a danger signal that triggers the immune responses. Has antiviral activity by sensing the presence of dsDNA from DNA viruses in the cytoplasm. Also acts as an innate immune sensor of infection by retroviruses, such as HIV-2, by detecting the presence of reverse-transcribed DNA in the cytosol. In contrast, HIV-1 is poorly sensed by CGAS, due to its capsid that cloaks viral DNA from CGAS detection. Detection of retroviral reverse-transcribed DNA in the cytosol may be indirect and be mediated via interaction with PQBP1, which directly binds reverse-transcribed retroviral DNA. Also detects the presence of DNA from bacteria, such as M.tuberculosis. 2',3'-cGAMP can be transferred from producing cells to neighboring cells through gap junctions, leading to promote STING1 activation and convey immune response to connecting cells. 2',3'-cGAMP can also be transferred between cells by virtue of packaging within viral particles contributing to IFN-induction in newly infected cells in a cGAS-independent but STING1-dependent manner. Also senses the presence of neutrophil extracellular traps (NETs) that are translocated to the cytosol following phagocytosis, leading to synthesis of 2',3'-cGAMP. In addition to foreign DNA, can also be activated by endogenous nuclear or mitochondrial DNA. When self-DNA leaks into the cytosol during cellular stress (such as mitochondrial stress, SARS-CoV-2 infection causing severe COVID-19 disease, DNA damage, mitotic arrest or senescence), or is present in form of cytosolic micronuclei, CGAS is activated leading to a state of sterile inflammation. Acts as a regulator of cellular senescence by binding to cytosolic chromatin fragments that are present in senescent cells, leading to trigger type-I interferon production via STING1 and promote cellular senescence. Also involved in the inflammatory response to genome instability and double-stranded DNA breaks: acts by localizing to micronuclei arising from genome instability. Micronuclei, which are frequently found in cancer cells, consist of chromatin surrounded by their own nuclear membrane: following breakdown of the micronuclear envelope, a process associated with chromothripsis, CGAS binds self-DNA exposed to the cytosol, leading to 2',3'-cGAMP synthesis and subsequent activation of STING1 and type-I interferon production. Activated in response to prolonged mitotic arrest, promoting mitotic cell death. In a healthy cell, CGAS is however kept inactive even in cellular events that directly expose it to self-DNA, such as mitosis, when cGAS associates with chromatin directly after nuclear envelope breakdown or remains in the form of postmitotic persistent nuclear cGAS pools bound to chromatin. Nuclear CGAS is inactivated by chromatin via direct interaction with nucleosomes, which block CGAS from DNA binding and thus prevent CGAS-induced autoimmunity. Also acts as a suppressor of DNA repair in response to DNA damage: inhibits homologous recombination repair by interacting with PARP1, the CGAS-PARP1 interaction leading to impede the formation of the PARP1-TIMELESS complex. In addition to DNA, also sense translation stress: in response to translation stress, translocates to the cytosol and associates with collided ribosomes, promoting its activation and triggering type-I interferon production. In contrast to other mammals, human CGAS displays species-specific mechanisms of DNA recognition and produces less 2',3'-cGAMP, allowing a more fine-tuned response to pathogens. This Homo sapiens (Human) protein is Cyclic GMP-AMP synthase.